Reading from the N-terminus, the 464-residue chain is Alpha-2A adrenergic receptor (464 aa).

Over 1-47 the chain is Extracellular; that stretch reads MFRQEQRWPRQLWPMGSLQPDSGNASWNGTEGPGGGTRATPYSLQVT. A disordered region spans residues 13 to 34; sequence WPMGSLQPDSGNASWNGTEGPG. Positions 19–29 are enriched in polar residues; the sequence is QPDSGNASWNG. 2 N-linked (GlcNAc...) asparagine glycosylation sites follow: Asn-24 and Asn-28. Residues 48-73 traverse the membrane as a helical segment; sequence VTLVCLVGLLILLTVFGNVLVIIAVF. Residues 74-84 lie on the Cytoplasmic side of the membrane; that stretch reads TSRALKAPQNL. A helical membrane pass occupies residues 85 to 110; sequence FLVSLASADILVATLVIPFSLANEVM. Over 111–120 the chain is Extracellular; the sequence is GYWYFGKAWC. Cys-120 and Cys-201 are disulfide-bonded. A helical membrane pass occupies residues 121 to 143; the sequence is EIYLALDVLFCTSSIVHLCAISL. At 144 to 163 the chain is on the cytoplasmic side; sequence DRYWSITQAIEYNLKRTPRR. The helical transmembrane segment at 164 to 187 threads the bilayer; that stretch reads IKAIIVTVWVISAVISFPPLISFE. The Extracellular portion of the chain corresponds to 188-206; the sequence is KAGGGGQQPAEPRCEINDQ. The chain crosses the membrane as a helical span at residues 207–231; that stretch reads KWYVISSSIGSFFAPCLIMILVYVR. The Cytoplasmic segment spans residues 232–388; that stretch reads IYQIAKRRTR…RQNREKRFTF (157 aa). Residues 240–378 form a disordered region; it reads TRVPPSRRGP…GGAKASRWRG (139 aa). Over residues 251 to 268 the composition is skewed to low complexity; that stretch reads AHAAAPPGGAERRPNGLG. The segment covering 312–329 has biased composition (basic and acidic residues); the sequence is SSEHAERPPGARRPERGL. Position 345 is a phosphoserine (Ser-345). Over residues 354 to 363 the composition is skewed to gly residues; that stretch reads AGSGTSGSGP. Arg-367 is modified (omega-N-methylarginine). The helical transmembrane segment at 389–413 threads the bilayer; the sequence is VLAVVIGVFVVCWFPFFFTYTLTAV. The Extracellular segment spans residues 414–423; that stretch reads GCSVPRTLFK. The chain crosses the membrane as a helical span at residues 424-444; that stretch reads FFFWFGYCNSSLNPVIYTIFN. Residues 445 to 464 are Cytoplasmic-facing; the sequence is HDFRRAFKKILCRGDRKRIV. Cys-456 is lipidated: S-palmitoyl cysteine.

Belongs to the G-protein coupled receptor 1 family. Adrenergic receptor subfamily. ADRA2A sub-subfamily. Component of the ADA2A-containing complex (ATAC), composed of KAT14, KAT2A, TADA2L, TADA3L, ZZ3, MBIP, WDR5, YEATS2, CCDC101 and DR1.

It localises to the cell membrane. Its function is as follows. Alpha-2 adrenergic receptors mediate the catecholamine-induced inhibition of adenylate cyclase through the action of G proteins. Component of the ATAC complex, a complex with histone acetyltransferase activity on histones H3 and H4. In Cavia porcellus (Guinea pig), this protein is Alpha-2A adrenergic receptor.